We begin with the raw amino-acid sequence, 501 residues long: Solute carrier family 2, facilitated glucose transporter member 5 (501 aa).

Met-1 carries the post-translational modification N-acetylmethionine. The Cytoplasmic segment spans residues 1-18 (MEQQDQSMKEGRLTLVLA). The helical transmembrane segment at 19-39 (LATLIAAFGSSFQYGYNVAAV) threads the bilayer. A D-fructose-binding site is contributed by Tyr-32. The Extracellular segment spans residues 40–68 (NSPALLMQQFYNETYYGRTGEFMEDFPLT). A glycan (N-linked (GlcNAc...) asparagine) is linked at Asn-51. A helical membrane pass occupies residues 69 to 91 (LLWSVTVSMFPFGGFIGSLLVGP). Residues 92–98 (LVNKFGR) lie on the Cytoplasmic side of the membrane. Residues 99–119 (KGALLFNNIFSIVPAILMGCS) form a helical membrane-spanning segment. Residues 120–126 (RVATSFE) are Extracellular-facing. Residues 127–149 (LIIISRLLVGICAGVSSNVVPMY) traverse the membrane as a helical segment. Over 150 to 161 (LGELAPKNLRGA) the chain is Cytoplasmic. Residues 162 to 182 (LGVVPQLFITVGILVAQIFGL) form a helical membrane-spanning segment. Gln-167 contributes to the D-fructose binding site. Residues 183-192 (RNLLANVDGW) lie on the Extracellular side of the membrane. Residues 193–213 (PILLGLTGVPAALQLLLLPFF) traverse the membrane as a helical segment. The Cytoplasmic portion of the chain corresponds to 214-277 (PESPRYLLIQ…LFRMRSLRWQ (64 aa)). A helical membrane pass occupies residues 278–298 (LLSIIVLMGGQQLSGVNAIYY). Residues Gln-288 and 296-298 (IYY) contribute to the D-fructose site. Residues 299 to 313 (YADQIYLSAGVPEEH) lie on the Extracellular side of the membrane. Residues 314–334 (VQYVTAGTGAVNVVMTFCAVF) traverse the membrane as a helical segment. Over 335-342 (VVELLGRR) the chain is Cytoplasmic. A helical transmembrane segment spans residues 343–363 (LLLLLGFSICLIACCVLTAAL). At 364–371 (ALQDTVSW) the chain is on the extracellular side. A helical membrane pass occupies residues 372–394 (MPYISIVCVISYVIGHALGPSPI). His-387 lines the D-fructose pocket. Residues 395-412 (PALLITEIFLQSSRPSAF) are Cytoplasmic-facing. The chain crosses the membrane as a helical span at residues 413-433 (MVGGSVHWLSNFTVGLIFPFI). A D-fructose-binding site is contributed by 419–420 (HW). Topologically, residues 434–439 (QEGLGP) are extracellular. Residues 440 to 460 (YSFIVFAVICLLTTIYIFLIV) form a helical membrane-spanning segment. At 461-501 (PETKAKTFIEINQIFTKMNKVSEVYPEKEELKELPPVTSEQ) the chain is on the cytoplasmic side.

In terms of tissue distribution, detected in skeletal muscle, and in jejunum brush border membrane and basolateral membrane (at protein level). Expressed in small intestine, and at much lower levels in kidney, skeletal muscle, and adipose tissue.

It localises to the apical cell membrane. The protein resides in the cell membrane. Its subcellular location is the sarcolemma. The enzyme catalyses D-fructose(out) = D-fructose(in). The uptake of 2-deoxyglucose is inhibited by cytochalasin B. Fructose transport is inhibited by the flavonoids epigallocatechin gallate and apigenin but not quercetin. Functions as a fructose transporter that has only low activity with other monosaccharides. Can mediate the uptake of 2-deoxyglucose, but with low efficiency. Essential for fructose uptake in the small intestine. Plays a role in the regulation of salt uptake and blood pressure in response to dietary fructose. Required for the development of high blood pressure in response to high dietary fructose intake. The polypeptide is Solute carrier family 2, facilitated glucose transporter member 5 (Homo sapiens (Human)).